Reading from the N-terminus, the 733-residue chain is uncharacterized protein (733 aa).

The helical transmembrane segment at 174 to 194 (WAVMILASLRPELFGPIIIAG) threads the bilayer.

The protein resides in the membrane. This is an uncharacterized protein from Rhizobium meliloti (Ensifer meliloti).